Consider the following 534-residue polypeptide: Lariat debranching enzyme (534 aa).

Residues Cys8, His10, Asp39, and Asn84 each contribute to the a divalent metal cation site. The interval 124 to 154 (SGIFKGHDFLRGHHEFPPYTDSTCRSVYHVR) is lariat recognition loop. 3 residues coordinate a divalent metal cation: His174, His226, and His228. 2 disordered regions span residues 242–275 (KLGD…PPPS) and 501–534 (TETP…AQED).

This sequence belongs to the lariat debranching enzyme family. Fe(2+) serves as cofactor. Zn(2+) is required as a cofactor. The cofactor is Mn(2+).

It is found in the nucleus. Its activity is regulated as follows. Active in presence of diverse metals including Fe(2+), Zn(2+), Mn(2+). Binds two metal cations in two adjacent alpha and beta metal-binding pockets. Functionally, cleaves the 2'-5' phosphodiester linkage at the branch point of lariat intron pre-mRNAs after splicing and converts them into linear molecules that are subsequently degraded. It thereby facilitates ribonucleotide turnover. The polypeptide is Lariat debranching enzyme (ldbr) (Drosophila melanogaster (Fruit fly)).